The following is a 503-amino-acid chain: Carboxyl-terminal PDZ ligand of neuronal nitric oxide synthase protein (503 aa).

The PID domain occupies 26–191 (FQHGISFEAK…ESERNSDGSG (166 aa)). Positions 170 to 212 (HTQQNADGQEDGESERNSDGSGDPGRQLTGAERVSTAAAEETD) are disordered. Phosphoserine occurs at positions 183, 187, 190, and 262. Positions 318-359 (AAEAAARLEAQARVHQLLLQNKDMLQHISLLVKQVQELELKL) form a coiled coil. Residues serine 367, serine 370, serine 397, and serine 413 each carry the phosphoserine modification. Residues 491-503 (QELGDSLDDEIAV) form an interaction with NOS1 region. The short motif at 501–503 (IAV) is the PDZ-binding element.

In terms of assembly, interacts with the PDZ domain of NOS1 or the second PDZ domain of DLG4 through its C-terminus. Interacts with RASD1 and SYN1, SYN2 and SYN3 via its PID domain. Forms a ternary complex with NOS1 and SYN1. Forms a ternary complex with NOS1 and RASD1.

Its subcellular location is the cell projection. The protein resides in the filopodium. The protein localises to the podosome. Its function is as follows. Adapter protein involved in neuronal nitric-oxide (NO) synthesis regulation via its association with nNOS/NOS1. The complex formed with NOS1 and synapsins is necessary for specific NO and synapsin functions at a presynaptic level. Mediates an indirect interaction between NOS1 and RASD1 leading to enhance the ability of NOS1 to activate RASD1. Competes with DLG4 for interaction with NOS1, possibly affecting NOS1 activity by regulating the interaction between NOS1 and DLG4. In kidney podocytes, plays a role in podosomes and filopodia formation through CDC42 activation. This chain is Carboxyl-terminal PDZ ligand of neuronal nitric oxide synthase protein, found in Mus musculus (Mouse).